The following is a 291-amino-acid chain: Ribosomal RNA small subunit methyltransferase I (291 aa).

It belongs to the methyltransferase superfamily. RsmI family.

It is found in the cytoplasm. It carries out the reaction cytidine(1402) in 16S rRNA + S-adenosyl-L-methionine = 2'-O-methylcytidine(1402) in 16S rRNA + S-adenosyl-L-homocysteine + H(+). Its function is as follows. Catalyzes the 2'-O-methylation of the ribose of cytidine 1402 (C1402) in 16S rRNA. The chain is Ribosomal RNA small subunit methyltransferase I from Neisseria meningitidis serogroup A / serotype 4A (strain DSM 15465 / Z2491).